A 270-amino-acid chain; its full sequence is DNA-directed RNA polymerase subunit Rpo3 (270 aa).

Positions 206, 209, and 212 each coordinate [3Fe-4S] cluster.

The protein belongs to the archaeal Rpo3/eukaryotic RPB3 RNA polymerase subunit family. In terms of assembly, part of the RNA polymerase complex. [3Fe-4S] cluster is required as a cofactor.

It is found in the cytoplasm. It carries out the reaction RNA(n) + a ribonucleoside 5'-triphosphate = RNA(n+1) + diphosphate. Functionally, DNA-dependent RNA polymerase (RNAP) catalyzes the transcription of DNA into RNA using the four ribonucleoside triphosphates as substrates. This is DNA-directed RNA polymerase subunit Rpo3 from Methanosphaera stadtmanae (strain ATCC 43021 / DSM 3091 / JCM 11832 / MCB-3).